A 553-amino-acid chain; its full sequence is Probable inactive serine/threonine-protein kinase samkD (553 aa).

Residues 24 to 90 (WDNETVCKWL…FEYQILKNCY (67 aa)) form the SAM domain. The Protein kinase domain maps to 134 to 393 (YQYIETISKN…SKELLKSFWF (260 aa)). ATP-binding positions include 140–148 (ISKNKFCEI) and Lys165.

It belongs to the protein kinase superfamily. Ser/Thr protein kinase family.

The polypeptide is Probable inactive serine/threonine-protein kinase samkD (samkD) (Dictyostelium discoideum (Social amoeba)).